The sequence spans 91 residues: MAKTNSINNAAYDQLNKDADRILQLIKVQMDNLTLPQCPLYEEVLDTQMFGLQKEVDFAANLGLIDIEMGKEIMLRLEKELSKLHEAFTNV.

It belongs to the UPF0358 family.

The chain is UPF0358 protein Sca_0738 from Staphylococcus carnosus (strain TM300).